We begin with the raw amino-acid sequence, 361 residues long: DNA replication and repair protein RecF (361 aa).

Position 30-37 (30-37 (GANGSGKT)) interacts with ATP.

It belongs to the RecF family.

It localises to the cytoplasm. Its function is as follows. The RecF protein is involved in DNA metabolism; it is required for DNA replication and normal SOS inducibility. RecF binds preferentially to single-stranded, linear DNA. It also seems to bind ATP. This Pectobacterium atrosepticum (strain SCRI 1043 / ATCC BAA-672) (Erwinia carotovora subsp. atroseptica) protein is DNA replication and repair protein RecF.